The following is a 154-amino-acid chain: 6,7-dimethyl-8-ribityllumazine synthase (154 aa).

Residues phenylalanine 22, 57–59, and 81–83 contribute to the 5-amino-6-(D-ribitylamino)uracil site; these read AYE and AVI. 86–87 contributes to the (2S)-2-hydroxy-3-oxobutyl phosphate binding site; it reads GT. Residue histidine 89 is the Proton donor of the active site. Residue phenylalanine 114 participates in 5-amino-6-(D-ribitylamino)uracil binding. Arginine 128 is a (2S)-2-hydroxy-3-oxobutyl phosphate binding site.

This sequence belongs to the DMRL synthase family. As to quaternary structure, forms an icosahedral capsid composed of 60 subunits, arranged as a dodecamer of pentamers.

The enzyme catalyses (2S)-2-hydroxy-3-oxobutyl phosphate + 5-amino-6-(D-ribitylamino)uracil = 6,7-dimethyl-8-(1-D-ribityl)lumazine + phosphate + 2 H2O + H(+). The protein operates within cofactor biosynthesis; riboflavin biosynthesis; riboflavin from 2-hydroxy-3-oxobutyl phosphate and 5-amino-6-(D-ribitylamino)uracil: step 1/2. Its function is as follows. Catalyzes the formation of 6,7-dimethyl-8-ribityllumazine by condensation of 5-amino-6-(D-ribitylamino)uracil with 3,4-dihydroxy-2-butanone 4-phosphate. This is the penultimate step in the biosynthesis of riboflavin. The protein is 6,7-dimethyl-8-ribityllumazine synthase of Colwellia psychrerythraea (strain 34H / ATCC BAA-681) (Vibrio psychroerythus).